The primary structure comprises 124 residues: Large ribosomal subunit protein bL21 (124 aa).

The tract at residues 105-124 (NAPSIGPRVRKAKPAAEAAE) is disordered.

This sequence belongs to the bacterial ribosomal protein bL21 family. In terms of assembly, part of the 50S ribosomal subunit. Contacts protein L20.

Its function is as follows. This protein binds to 23S rRNA in the presence of protein L20. This chain is Large ribosomal subunit protein bL21, found in Rhodopseudomonas palustris (strain BisA53).